The following is a 749-amino-acid chain: Protein kinase domain-containing protein ppk32 (749 aa).

The region spanning 21 to 317 (IQKENSVQVG…MFELERSPYF (297 aa)) is the Protein kinase domain. Disordered stretches follow at residues 598–677 (KKLQ…VTAK) and 706–749 (PLIP…KSLL). Polar residues predominate over residues 602–651 (SKPSSVVPNRITTDPFSSQTKEATSKPSSISPNKATTNIFTSQASLSSQG). At Ser-632 the chain carries Phosphoserine. Composition is skewed to low complexity over residues 657–670 (SSAS…QRAS) and 721–735 (NRRV…NTVT).

Its subcellular location is the cytoplasm. In Schizosaccharomyces pombe (strain 972 / ATCC 24843) (Fission yeast), this protein is Protein kinase domain-containing protein ppk32 (ppk32).